Reading from the N-terminus, the 234-residue chain is Orofacial cleft 1 candidate gene 1 protein homolog (234 aa).

Disordered stretches follow at residues 1–21 and 201–234; these read MEKE…KSKS and SKHH…WQQR. Residues 202-213 show a composition bias toward basic residues; the sequence is KHHKEASHHNKK. The span at 223–234 shows a compositional bias: basic and acidic residues; sequence FKDREASRWQQR.

This chain is Orofacial cleft 1 candidate gene 1 protein homolog (OFCC1), found in Gallus gallus (Chicken).